We begin with the raw amino-acid sequence, 353 residues long: C2 calcium-dependent domain-containing protein 4D (353 aa).

The disordered stretch occupies residues 135-191 (CRAPDSDTASSPDSSPFGSPRPGLGRRRVSRPHSLSPEKASSADTSPHSPRRAGPPT). Over residues 140–150 (SDTASSPDSSP) the composition is skewed to low complexity. Positions 217–343 (RGGQLRLSTE…PPLGGGLGPG (127 aa)) constitute a C2 domain.

The polypeptide is C2 calcium-dependent domain-containing protein 4D (C2CD4D) (Homo sapiens (Human)).